Here is a 98-residue protein sequence, read N- to C-terminus: MPKRKSPEGAEGKDAAKVTKQEPTRRSARLSAKPAPPKPEPKPRKTTKKEPGTKANKGAKGKKDEKQEAAKEGTTPSENGENKAEEAQKTESVGDKNE.

Composition is skewed to basic and acidic residues over residues 1-25 (MPKRKSPEGAEGKDAAKVTKQEPTR), 39-52 (PEPKPRKTTKKEPG), 61-71 (GKKDEKQEAAK), and 80-98 (GENKAEEAQKTESVGDKNE). A disordered region spans residues 1 to 98 (MPKRKSPEGA…KTESVGDKNE (98 aa)).

It belongs to the HMGN family.

Its subcellular location is the nucleus. This chain is High mobility group nucleosome-binding domain-containing protein 3 (HMGN3), found in Gallus gallus (Chicken).